We begin with the raw amino-acid sequence, 164 residues long: S-ribosylhomocysteine lyase (164 aa).

The Fe cation site is built by histidine 54, histidine 58, and cysteine 128.

It belongs to the LuxS family. In terms of assembly, homodimer. Fe cation is required as a cofactor.

The catalysed reaction is S-(5-deoxy-D-ribos-5-yl)-L-homocysteine = (S)-4,5-dihydroxypentane-2,3-dione + L-homocysteine. Involved in the synthesis of autoinducer 2 (AI-2) which is secreted by bacteria and is used to communicate both the cell density and the metabolic potential of the environment. The regulation of gene expression in response to changes in cell density is called quorum sensing. Catalyzes the transformation of S-ribosylhomocysteine (RHC) to homocysteine (HC) and 4,5-dihydroxy-2,3-pentadione (DPD). This chain is S-ribosylhomocysteine lyase, found in Campylobacter hominis (strain ATCC BAA-381 / DSM 21671 / CCUG 45161 / LMG 19568 / NCTC 13146 / CH001A).